A 266-amino-acid chain; its full sequence is GRIP and coiled-coil domain-containing protein C365.11 (266 aa).

A compositionally biased stretch (polar residues) spans 1 to 13 (METTVSAKNSLEN). Positions 1–88 (METTVSAKNS…LDEKVKELEN (88 aa)) are disordered. Position 10 is a phosphoserine (S10). Over residues 36–49 (ASKKKRKNRKKKKN) the composition is skewed to basic residues. Residues 63-88 (EEQRSGSIDSKDKEKPLDEKVKELEN) show a composition bias toward basic and acidic residues. A coiled-coil region spans residues 73–188 (KDKEKPLDEK…ESVKSHESEL (116 aa)). Phosphoserine is present on residues S202 and S204. In terms of domain architecture, GRIP spans 216–264 (ISKELINKEYARNVLLQFLENHEHRDKILPILSTALDLEEVHQHLILKN).

It localises to the cytoplasm. The chain is GRIP and coiled-coil domain-containing protein C365.11 from Schizosaccharomyces pombe (strain 972 / ATCC 24843) (Fission yeast).